We begin with the raw amino-acid sequence, 429 residues long: Glycogenin-1 (429 aa).

Residues leucine 8, threonine 10, asparagine 11, tyrosine 14, and arginine 76 each contribute to the UDP site. Residues leucine 8, threonine 10, asparagine 11, tyrosine 14, arginine 76, lysine 85, aspartate 101, alanine 102, aspartate 103, asparagine 132, serine 133, aspartate 159, aspartate 162, and glutamine 163 each contribute to the UDP-alpha-D-glucose site. Residues aspartate 101, alanine 102, and aspartate 103 each coordinate UDP. Aspartate 101 serves as a coordination point for Mn(2+). Aspartate 103 provides a ligand contact to Mn(2+). The O-linked (Glc...) tyrosine glycan is linked to tyrosine 194. Residues histidine 211, glycine 214, and lysine 217 each coordinate UDP. Histidine 211 is a Mn(2+) binding site. The UDP-alpha-D-glucose site is built by glycine 214 and lysine 217. 2 disordered regions span residues 254-274 and 300-338; these read VFPSHHHTPEHRSHSADHPKI and SYDTDANTSDSHRNNEPHKHDQQREEHHELPHNKFQTPH. Basic and acidic residues-rich tracts occupy residues 263–274 and 309–338; these read EHRSHSADHPKI and DSHRNNEPHKHDQQREEHHELPHNKFQTPH.

This sequence belongs to the glycosyltransferase 8 family. Glycogenin subfamily. As to quaternary structure, forms a heterooctamer with one molecule of gyg-1 bound to each protomer of the gys-1 homotetramer. The N-terminus of gys-1 is involved in interprotomer contacts with gyg-1. The interaction with gys-1 is required for glycogen production but is not required for gys-1 intrinsic activity. It depends on Mn(2+) as a cofactor. Post-translationally, self-glycosylated by the transfer of glucose residues from UDP-glucose to itself, forming an alpha-1,4-glycan of around 10 residues attached to Tyr-194.

The protein resides in the cytoplasm. It is found in the nucleus. It carries out the reaction L-tyrosyl-[glycogenin] + UDP-alpha-D-glucose = alpha-D-glucosyl-L-tyrosyl-[glycogenin] + UDP + H(+). It catalyses the reaction [1,4-alpha-D-glucosyl](n)-L-tyrosyl-[glycogenin] + UDP-alpha-D-glucose = [1,4-alpha-D-glucosyl](n+1)-L-tyrosyl-[glycogenin] + UDP + H(+). Its pathway is glycan biosynthesis; glycogen biosynthesis. Its function is as follows. Self-glucosylating initiator of glycogen synthesis. It catalyzes the formation of a short alpha (1,4)-glucosyl chain covalently attached via a glucose 1-O-tyrosyl linkage to internal tyrosine residues and these chains act as primers for the elongation reaction catalyzed by glycogen synthase. This chain is Glycogenin-1, found in Caenorhabditis elegans.